The primary structure comprises 364 residues: Melatonin receptor type 1B (364 aa).

Residues Met-1–Met-42 are Extracellular-facing. N-linked (GlcNAc...) asparagine glycosylation occurs at Asn-4. Residues Leu-43–Leu-63 traverse the membrane as a helical segment. Over Ser-64–Asn-76 the chain is Cytoplasmic. A helical transmembrane segment spans residues Leu-77–Ile-97. Topologically, residues Leu-98 to Ala-115 are extracellular. Cys-113 and Cys-190 are joined by a disulfide. The helical transmembrane segment at Ser-116–Ile-136 threads the bilayer. Residues Asn-137–Trp-155 are Cytoplasmic-facing. Residues Tyr-156–Phe-176 traverse the membrane as a helical segment. Residues Phe-177–Tyr-200 are Extracellular-facing. A helical membrane pass occupies residues Thr-201–Leu-221. Over Arg-222–Met-253 the chain is Cytoplasmic. The helical transmembrane segment at Phe-254 to Val-274 threads the bilayer. At Ala-275 to Glu-287 the chain is on the extracellular side. The chain crosses the membrane as a helical span at residues Gly-288–Tyr-308. The Cytoplasmic portion of the chain corresponds to Gly-309–Leu-364. The segment at Glu-343–Leu-364 is disordered. The span at Ala-352–Leu-364 shows a compositional bias: low complexity.

Belongs to the G-protein coupled receptor 1 family.

The protein resides in the cell membrane. Functionally, high affinity receptor for melatonin. The activity of this receptor is mediated by pertussis toxin sensitive G proteins that inhibits adenylate cyclase activity. The protein is Melatonin receptor type 1B (Mtnr1b) of Mus musculus (Mouse).